A 47-amino-acid chain; its full sequence is Large ribosomal subunit protein bL33C (47 aa).

The protein belongs to the bacterial ribosomal protein bL33 family.

This is Large ribosomal subunit protein bL33C from Staphylococcus aureus (strain MRSA252).